Here is a 95-residue protein sequence, read N- to C-terminus: DASH complex subunit DAD3 (95 aa).

This sequence belongs to the DASH complex DAD3 family. As to quaternary structure, component of the DASH complex consisting of ASK1, DAD1, DAD2, DAD3, DAD4, DAM1, DUO1, HSK3, SPC19 and SPC34, with a stoichiometry of one copy of each subunit per complex. Multiple DASH complexes oligomerize to form a ring that encircles spindle microtubules and organizes the rod-like NDC80 complexes of the outer kinetochore. DASH complex oligomerization strengthens microtubule attachments. On cytoplasmic microtubules, DASH complexes appear to form patches instead of rings.

The protein localises to the chromosome. It localises to the centromere. It is found in the kinetochore. The protein resides in the cytoplasm. Its subcellular location is the cytoskeleton. The protein localises to the spindle. It localises to the nucleus. Component of the DASH complex that connects microtubules with kinetochores and couples microtubule depolymerisation to chromosome movement; it is involved in retrieving kinetochores to the spindle poles before their re-orientation on the spindle in early mitosis and allows microtubule depolymerization to pull chromosomes apart and resist detachment during anaphase. Kinetochores, consisting of a centromere-associated inner segment and a microtubule-contacting outer segment, play a crucial role in chromosome segregation by mediating the physical connection between centromeric DNA and microtubules. Kinetochores also serve as an input point for the spindle assembly checkpoint, which delays anaphase until all chromosomes have bioriented on the mitotic spindle. The chain is DASH complex subunit DAD3 from Chaetomium thermophilum (strain DSM 1495 / CBS 144.50 / IMI 039719) (Thermochaetoides thermophila).